The primary structure comprises 253 residues: Proteasome subunit alpha (253 aa).

Residues 229–253 (ADESQSYIDDIEDAADDSDDDDDEE) form a disordered region. Residues 237–253 (DDIEDAADDSDDDDDEE) show a composition bias toward acidic residues.

This sequence belongs to the peptidase T1A family. The 20S proteasome core is composed of 14 alpha and 14 beta subunits that assemble into four stacked heptameric rings, resulting in a barrel-shaped structure. The two inner rings, each composed of seven catalytic beta subunits, are sandwiched by two outer rings, each composed of seven alpha subunits. The catalytic chamber with the active sites is on the inside of the barrel. Has a gated structure, the ends of the cylinder being occluded by the N-termini of the alpha-subunits. Is capped at one or both ends by the proteasome regulatory ATPase, PAN.

It is found in the cytoplasm. The formation of the proteasomal ATPase PAN-20S proteasome complex, via the docking of the C-termini of PAN into the intersubunit pockets in the alpha-rings, triggers opening of the gate for substrate entry. Interconversion between the open-gate and close-gate conformations leads to a dynamic regulation of the 20S proteasome proteolysis activity. In terms of biological role, component of the proteasome core, a large protease complex with broad specificity involved in protein degradation. The chain is Proteasome subunit alpha from Halobacterium salinarum (strain ATCC 29341 / DSM 671 / R1).